An 88-amino-acid chain; its full sequence is Small ribosomal subunit protein bS20 (88 aa).

The tract at residues 1–27 (MANTKQAQKRARQAEQRRQHNASQRSM) is disordered.

The protein belongs to the bacterial ribosomal protein bS20 family.

In terms of biological role, binds directly to 16S ribosomal RNA. In Chromohalobacter salexigens (strain ATCC BAA-138 / DSM 3043 / CIP 106854 / NCIMB 13768 / 1H11), this protein is Small ribosomal subunit protein bS20.